The primary structure comprises 268 residues: 4-hydroxy-tetrahydrodipicolinate reductase (268 aa).

NAD(+)-binding positions include 10-15 (GASGRM), aspartate 36, 99-101 (GTT), and 123-126 (APNM). Residue histidine 156 is the Proton donor/acceptor of the active site. (S)-2,3,4,5-tetrahydrodipicolinate is bound at residue histidine 157. Lysine 160 (proton donor) is an active-site residue. 166-167 (GT) is a (S)-2,3,4,5-tetrahydrodipicolinate binding site.

This sequence belongs to the DapB family.

The protein localises to the cytoplasm. The catalysed reaction is (S)-2,3,4,5-tetrahydrodipicolinate + NAD(+) + H2O = (2S,4S)-4-hydroxy-2,3,4,5-tetrahydrodipicolinate + NADH + H(+). The enzyme catalyses (S)-2,3,4,5-tetrahydrodipicolinate + NADP(+) + H2O = (2S,4S)-4-hydroxy-2,3,4,5-tetrahydrodipicolinate + NADPH + H(+). Its pathway is amino-acid biosynthesis; L-lysine biosynthesis via DAP pathway; (S)-tetrahydrodipicolinate from L-aspartate: step 4/4. Catalyzes the conversion of 4-hydroxy-tetrahydrodipicolinate (HTPA) to tetrahydrodipicolinate. The sequence is that of 4-hydroxy-tetrahydrodipicolinate reductase from Janthinobacterium sp. (strain Marseille) (Minibacterium massiliensis).